The following is a 239-amino-acid chain: Transmembrane emp24 domain-containing protein 6 (239 aa).

The signal sequence occupies residues 1–21; that stretch reads MFPLLLVAELVVLSLVTSVKS. The Lumenal segment spans residues 22–200; it reads QETDPLHGSK…FFLLQSNYTY (179 aa). Positions 53–138 constitute a GOLD domain; it reads IECFWQFADQ…SIQVYLNFGV (86 aa). 2 N-linked (GlcNAc...) asparagine glycosylation sites follow: N156 and N197. The chain crosses the membrane as a helical span at residues 201–223; the sequence is VNWWSTAQSLAIVLSGALQLYFL. Residues 224 to 239 are Cytoplasmic-facing; the sequence is KRLFTASTTDTKKPRC.

It belongs to the EMP24/GP25L family.

The protein localises to the endoplasmic reticulum membrane. This is Transmembrane emp24 domain-containing protein 6 (Tmed6) from Mus musculus (Mouse).